The sequence spans 280 residues: Putative pyruvate, phosphate dikinase regulatory protein (280 aa).

Residue 156-163 (GVSRTSKT) coordinates ADP.

This sequence belongs to the pyruvate, phosphate/water dikinase regulatory protein family. PDRP subfamily.

It catalyses the reaction N(tele)-phospho-L-histidyl/L-threonyl-[pyruvate, phosphate dikinase] + ADP = N(tele)-phospho-L-histidyl/O-phospho-L-threonyl-[pyruvate, phosphate dikinase] + AMP + H(+). The enzyme catalyses N(tele)-phospho-L-histidyl/O-phospho-L-threonyl-[pyruvate, phosphate dikinase] + phosphate + H(+) = N(tele)-phospho-L-histidyl/L-threonyl-[pyruvate, phosphate dikinase] + diphosphate. In terms of biological role, bifunctional serine/threonine kinase and phosphorylase involved in the regulation of the pyruvate, phosphate dikinase (PPDK) by catalyzing its phosphorylation/dephosphorylation. The polypeptide is Putative pyruvate, phosphate dikinase regulatory protein (Hyphomonas neptunium (strain ATCC 15444)).